Reading from the N-terminus, the 330-residue chain is Biotin synthase (330 aa).

Positions 55–282 (NAVQRSTLLS…TAYVRLSAGR (228 aa)) constitute a Radical SAM core domain. [4Fe-4S] cluster is bound by residues C70, C74, and C77. Residues C114, C145, C205, and R277 each coordinate [2Fe-2S] cluster.

It belongs to the radical SAM superfamily. Biotin synthase family. As to quaternary structure, homodimer. Requires [4Fe-4S] cluster as cofactor. The cofactor is [2Fe-2S] cluster.

The catalysed reaction is (4R,5S)-dethiobiotin + (sulfur carrier)-SH + 2 reduced [2Fe-2S]-[ferredoxin] + 2 S-adenosyl-L-methionine = (sulfur carrier)-H + biotin + 2 5'-deoxyadenosine + 2 L-methionine + 2 oxidized [2Fe-2S]-[ferredoxin]. It functions in the pathway cofactor biosynthesis; biotin biosynthesis; biotin from 7,8-diaminononanoate: step 2/2. Functionally, catalyzes the conversion of dethiobiotin (DTB) to biotin by the insertion of a sulfur atom into dethiobiotin via a radical-based mechanism. The chain is Biotin synthase from Methylibium petroleiphilum (strain ATCC BAA-1232 / LMG 22953 / PM1).